Here is a 70-residue protein sequence, read N- to C-terminus: U-scutigerotoxin(02)-Tl1a (70 aa).

The first 17 residues, 1-17 (MKYILLGLLLMVVLANA), serve as a signal peptide directing secretion.

This sequence belongs to the scutigerotoxin-02 family. In terms of processing, contains 4 disulfide bonds. Expressed by the venom gland.

It is found in the secreted. This is U-scutigerotoxin(02)-Tl1a from Thereuopoda longicornis (Long-legged centipede).